The following is a 299-amino-acid chain: Mitochondrial 2-oxodicarboxylate carrier (299 aa).

Solcar repeat units follow at residues Arg11–Leu100, Ser107–Met196, and Leu205–Trp294. 6 helical membrane-spanning segments follow: residues Ile17 to Val37, Phe70 to Val89, Ala113 to Val133, Gly167 to Phe187, Leu205 to Asn225, and Leu277 to Glu297.

It belongs to the mitochondrial carrier (TC 2.A.29) family. Expressed in placenta, gall bladder and colon.

The protein localises to the mitochondrion inner membrane. It carries out the reaction 2-oxoadipate(in) + 2-oxoglutarate(out) = 2-oxoadipate(out) + 2-oxoglutarate(in). The catalysed reaction is hexanedioate(in) + 2-oxoglutarate(out) = hexanedioate(out) + 2-oxoglutarate(in). The enzyme catalyses L-2-aminoadipate(in) + 2-oxoglutarate(out) = L-2-aminoadipate(out) + 2-oxoglutarate(in). It catalyses the reaction glutarate(in) + 2-oxoglutarate(out) = glutarate(out) + 2-oxoglutarate(in). It carries out the reaction 2-oxoheptanedioate(in) + 2-oxoglutarate(out) = 2-oxoheptanedioate(out) + 2-oxoglutarate(in). The catalysed reaction is heptanedioate(in) + 2-oxoglutarate(out) = heptanedioate(out) + 2-oxoglutarate(in). The enzyme catalyses citrate(in) + 2-oxoglutarate(out) = citrate(out) + 2-oxoglutarate(in). In terms of biological role, transports dicarboxylates across the inner membranes of mitochondria by a counter-exchange mechanism. Can transport 2-oxoadipate (2-oxohexanedioate), 2-oxoglutarate, adipate (hexanedioate), glutarate, and to a lesser extent, pimelate (heptanedioate), 2-oxopimelate (2-oxoheptanedioate), 2-aminoadipate (2-aminohexanedioate), oxaloacetate, and citrate. Plays a central role in catabolism of lysine, hydroxylysine, and tryptophan, by transporting common metabolite intermediates (such as 2-oxoadipate) into the mitochondria, where it is converted into acetyl-CoA and can enter the citric acid (TCA) cycle. The polypeptide is Mitochondrial 2-oxodicarboxylate carrier (SLC25A21) (Homo sapiens (Human)).